A 63-amino-acid polypeptide reads, in one-letter code: Large ribosomal subunit protein uL30 (63 aa).

It belongs to the universal ribosomal protein uL30 family. Part of the 50S ribosomal subunit.

The sequence is that of Large ribosomal subunit protein uL30 from Methylobacterium sp. (strain 4-46).